A 65-amino-acid polypeptide reads, in one-letter code: Large ribosomal subunit protein bL35 (65 aa).

The segment at 1 to 26 is disordered; that stretch reads MPKIKTLRSAAKRFKKTESGKFKRKQ.

Belongs to the bacterial ribosomal protein bL35 family.

This Buchnera aphidicola subsp. Baizongia pistaciae (strain Bp) protein is Large ribosomal subunit protein bL35.